A 572-amino-acid polypeptide reads, in one-letter code: Urease subunit alpha (572 aa).

Positions 134–572 (AGIDTHIHLI…AAMNQLYFFG (439 aa)) constitute a Urease domain. Ni(2+)-binding residues include H139, H141, and K222. Residue K222 is modified to N6-carboxylysine. H224 contributes to the substrate binding site. Residues H251 and H277 each coordinate Ni(2+). The active-site Proton donor is H325. Residue D365 participates in Ni(2+) binding.

Belongs to the metallo-dependent hydrolases superfamily. Urease alpha subunit family. Heterotrimer of UreA (gamma), UreB (beta) and UreC (alpha) subunits. Three heterotrimers associate to form the active enzyme. Requires Ni cation as cofactor. In terms of processing, carboxylation allows a single lysine to coordinate two nickel ions.

Its subcellular location is the cytoplasm. It carries out the reaction urea + 2 H2O + H(+) = hydrogencarbonate + 2 NH4(+). Its pathway is nitrogen metabolism; urea degradation; CO(2) and NH(3) from urea (urease route): step 1/1. The chain is Urease subunit alpha from Edwardsiella ictaluri (strain 93-146).